Consider the following 648-residue polypeptide: Bifunctional protein TilS/HprT (648 aa).

29 to 34 (SGGPDS) contributes to the ATP binding site. D627 contacts Mg(2+).

The protein in the N-terminal section; belongs to the tRNA(Ile)-lysidine synthase family. It in the C-terminal section; belongs to the purine/pyrimidine phosphoribosyltransferase family. Mg(2+) serves as cofactor.

The protein resides in the cytoplasm. The enzyme catalyses IMP + diphosphate = hypoxanthine + 5-phospho-alpha-D-ribose 1-diphosphate. The catalysed reaction is GMP + diphosphate = guanine + 5-phospho-alpha-D-ribose 1-diphosphate. It carries out the reaction cytidine(34) in tRNA(Ile2) + L-lysine + ATP = lysidine(34) in tRNA(Ile2) + AMP + diphosphate + H(+). In terms of biological role, ligates lysine onto the cytidine present at position 34 of the AUA codon-specific tRNA(Ile) that contains the anticodon CAU, in an ATP-dependent manner. Cytidine is converted to lysidine, thus changing the amino acid specificity of the tRNA from methionine to isoleucine. The sequence is that of Bifunctional protein TilS/HprT (tilS/hprT) from Listeria innocua serovar 6a (strain ATCC BAA-680 / CLIP 11262).